The chain runs to 247 residues: Phycobilisome rod-core linker polypeptide CpcG2 (247 aa).

Positions 11-189 (SSQNQRVPGY…YWRDKLESER (179 aa)) constitute a PBS-linker domain. Positions 223–247 (PDTTRNTTPTGIPISVNPSANFPVR) are disordered.

It belongs to the phycobilisome linker protein family. Part of the phycobilisome, a hemidiscoidal structure that is composed of two distinct substructures: a core complex and a number of rods radiating from the core.

It localises to the cellular thylakoid membrane. Its function is as follows. Rod-core linker protein required for attachment of phycocyanin to allophycocyanin in cores of phycobilisomes. Linker polypeptides determine the state of aggregation and the location of the disk-shaped phycobiliprotein units within the phycobilisome and modulate their spectroscopic properties in order to mediate a directed and optimal energy transfer. The protein is Phycobilisome rod-core linker polypeptide CpcG2 of Nostoc sp. (strain PCC 7120 / SAG 25.82 / UTEX 2576).